Reading from the N-terminus, the 146-residue chain is Protein translocase subunit SecE (146 aa).

The interval 1-81 (MSDERYAASD…KVKKPKKSAD (81 aa)) is disordered. Gly residues predominate over residues 10-20 (DGGGTEVGSGT). The segment covering 45 to 54 (RAANASNTGA) has biased composition (polar residues). The segment covering 69-81 (KEGKVKKPKKSAD) has biased composition (basic and acidic residues). Residues 118–138 (VVLAFLAFMVALVGLADFGLA) form a helical membrane-spanning segment.

The protein belongs to the SecE/SEC61-gamma family. As to quaternary structure, component of the Sec protein translocase complex. Heterotrimer consisting of SecY, SecE and SecG subunits. The heterotrimers can form oligomers, although 1 heterotrimer is thought to be able to translocate proteins. Interacts with the ribosome. Interacts with SecDF, and other proteins may be involved. Interacts with SecA.

It is found in the cell membrane. Functionally, essential subunit of the Sec protein translocation channel SecYEG. Clamps together the 2 halves of SecY. May contact the channel plug during translocation. The polypeptide is Protein translocase subunit SecE (Mycobacterium leprae (strain TN)).